Here is a 356-residue protein sequence, read N- to C-terminus: Xylose/arabinose import permease protein XylH (356 aa).

10 helical membrane-spanning segments follow: residues 14-34, 41-61, 70-90, 96-116, 126-146, 161-181, 211-231, 242-262, 266-286, and 287-307; these read LFLVNVIIALFFYFENSAYFS, IFQYLAEIGIIAIGEAMLMLC, ALANFVPLITLTIYNSIYQAI, IVVSILLSLGLASLIGLMNGL, LITTVGTLFLFNGIALIYSGG, VSILPVPFIWSLGALVFLILL, VKIINFIIMANIGALVGIIQG, FTADVVLEGIAAAVIGGTSLV, GSLVGAFLGSVFISELLNGFN, and ILGINAYEFDAILGGAIVVVM.

This sequence belongs to the binding-protein-dependent transport system permease family. As to quaternary structure, the complex is composed of two ATP-binding proteins (XylG), two transmembrane proteins (XylH) and a solute-binding protein (XylF).

The protein resides in the cell membrane. In terms of biological role, part of the ABC transporter complex XylFGH involved in the uptake of xylose and arabinose. Responsible for the translocation of the substrate across the membrane. This is Xylose/arabinose import permease protein XylH from Sulfolobus acidocaldarius (strain ATCC 33909 / DSM 639 / JCM 8929 / NBRC 15157 / NCIMB 11770).